The sequence spans 238 residues: Purine nucleoside phosphorylase DeoD-type (238 aa).

Histidine 4 lines the a purine D-ribonucleoside pocket. Phosphate-binding positions include glycine 20, arginine 24, arginine 43, and 87-90 (RVGS). A purine D-ribonucleoside-binding positions include 179–181 (EME) and 203–204 (SD). Aspartate 204 functions as the Proton donor in the catalytic mechanism.

Belongs to the PNP/UDP phosphorylase family. As to quaternary structure, homohexamer; trimer of homodimers.

The enzyme catalyses a purine D-ribonucleoside + phosphate = a purine nucleobase + alpha-D-ribose 1-phosphate. It catalyses the reaction a purine 2'-deoxy-D-ribonucleoside + phosphate = a purine nucleobase + 2-deoxy-alpha-D-ribose 1-phosphate. In terms of biological role, catalyzes the reversible phosphorolytic breakdown of the N-glycosidic bond in the beta-(deoxy)ribonucleoside molecules, with the formation of the corresponding free purine bases and pentose-1-phosphate. In Pasteurella multocida (strain Pm70), this protein is Purine nucleoside phosphorylase DeoD-type.